The sequence spans 259 residues: uncharacterized protein (259 aa).

E46 is a catalytic residue.

It belongs to the PhzF family.

This is an uncharacterized protein from Pseudomonas aeruginosa (strain ATCC 15692 / DSM 22644 / CIP 104116 / JCM 14847 / LMG 12228 / 1C / PRS 101 / PAO1).